Consider the following 687-residue polypeptide: Fimbrin-5 (687 aa).

One can recognise an EF-hand domain in the interval 7 to 74 (VLVSDPWLQS…KSVLDKSYPN (68 aa)). Calponin-homology (CH) domains follow at residues 122–239 (ESEK…KIQM), 267–370 (LAPE…QHRN), 392–498 (SREE…RYTM), and 513–621 (EITD…YWSL). 2 actin-binding regions span residues 122 to 370 (ESEK…QHRN) and 392 to 621 (SREE…YWSL). Residues 628 to 687 (ESTVSEDATDDGDANSVAGEISNLSIDGASESSPTVQDQELLTKADNDEDEVDGENNKDA) form a disordered region. The segment covering 649-667 (SNLSIDGASESSPTVQDQE) has biased composition (polar residues).

In terms of assembly, interacts with F-actin. In terms of tissue distribution, expressed in mature pollen.

It localises to the cytoplasm. Its subcellular location is the cytoskeleton. Its function is as follows. Cross-links actin filaments (F-actin) in a calcium independent manner. Induces the formation of actin bundles. Stabilizes and prevents F-actin depolymerization mediated by latrunculin B (LatB). The polypeptide is Fimbrin-5 (Arabidopsis thaliana (Mouse-ear cress)).